The following is a 2080-amino-acid chain: Dedicator of cytokinesis protein 6 (2080 aa).

The span at 20–31 (EVRKQVSRERSG) shows a compositional bias: basic and acidic residues. 3 disordered regions span residues 20–44 (EVRKQVSRERSGSPHSSRRSSSSLG), 156–189 (QDTPGDERTGPEDVDDPQHCSGSPEDTPRSSGAS), and 408–441 (PQDRDSDSEGERRPTWAERRRRGPQDRGYSGDDA). Residues 32-42 (SPHSSRRSSSS) show a composition bias toward low complexity. Phosphoserine is present on Ser178. The span at 408–425 (PQDRDSDSEGERRPTWAE) shows a compositional bias: basic and acidic residues. Residues 546–712 (RNLLFVYPHS…GVFSVELTAV (167 aa)) enclose the C2 DOCK-type domain. Arg863 is modified (omega-N-methylarginine). Ser870, Ser878, and Ser882 each carry phosphoserine. The disordered stretch occupies residues 1101–1123 (ASPSPSVSSTTSQSSTFSSQAPD). Positions 1104–1122 (SPSVSSTTSQSSTFSSQAP) are enriched in low complexity. The residue at position 1341 (Ser1341) is a Phosphoserine. The DOCKER domain occupies 1620–2056 (RGYQGSPDLR…LQPLLTQRLP (437 aa)). Thr2064 is modified (phosphothreonine). 2 positions are modified to phosphoserine: Ser2065 and Ser2069.

This sequence belongs to the DOCK family. As to expression, widely expressed with highest levels in lung and heart.

It localises to the cytoplasm. The protein localises to the perinuclear region. Functionally, acts as a guanine nucleotide exchange factor (GEF) for CDC42 and RAC1 small GTPases. Through its activation of CDC42 and RAC1, regulates neurite outgrowth in an vitro differentiation system. This chain is Dedicator of cytokinesis protein 6 (Dock6), found in Mus musculus (Mouse).